The following is a 336-amino-acid chain: Terephthalate 1,2-dioxygenase, reductase component 1 (336 aa).

The 89-residue stretch at 3-91 (HQIHIHDSDI…DIRIQPSSFR (89 aa)) folds into the 2Fe-2S ferredoxin-type domain. The [2Fe-2S] cluster site is built by Cys-37, Cys-42, Cys-45, and Cys-75. The region spanning 98 to 197 (RKRFTAKVYS…ELPFGSIALK (100 aa)) is the FAD-binding FR-type domain.

As to quaternary structure, monomer. Part of a multicomponent enzyme system composed of a reductase (TphA1I or TphA1II) and a two-subunit oxygenase component (TphA2I or TphA2II and TphA3I or TphA3II). It depends on FAD as a cofactor. Requires [2Fe-2S] cluster as cofactor.

It catalyses the reaction terephthalate + NADH + O2 + H(+) = (3S,4R)-3,4-dihydroxycyclohexa-1,5-diene-1,4-dicarboxylate + NAD(+). In terms of biological role, component of the terephthalate 1,2-dioxygenase multicomponent enzyme system which catalyzes the dioxygenation of terephthalate (TER/TPA) to 1,2-dihydroxy-3,5-cyclohexadiene-1,4-dicarboxylic acid (DCD). TphA1 probably reduces TphA2A3. It can also use 2,5-dicarboxypyridine (PDC) and 1,4-napthalenedicarboxylic acid (NDC) as substrates, and preferentially uses NADPH which is the physiological electron donor. In Comamonas sp, this protein is Terephthalate 1,2-dioxygenase, reductase component 1 (tphA1I).